The primary structure comprises 186 residues: Elongation factor P (186 aa).

The protein belongs to the elongation factor P family.

The protein resides in the cytoplasm. It participates in protein biosynthesis; polypeptide chain elongation. Involved in peptide bond synthesis. Stimulates efficient translation and peptide-bond synthesis on native or reconstituted 70S ribosomes in vitro. Probably functions indirectly by altering the affinity of the ribosome for aminoacyl-tRNA, thus increasing their reactivity as acceptors for peptidyl transferase. This Cupriavidus necator (strain ATCC 17699 / DSM 428 / KCTC 22496 / NCIMB 10442 / H16 / Stanier 337) (Ralstonia eutropha) protein is Elongation factor P.